A 427-amino-acid chain; its full sequence is 3-phosphoshikimate 1-carboxyvinyltransferase (427 aa).

Residues lysine 22, serine 23, and arginine 27 each contribute to the 3-phosphoshikimate site. Position 22 (lysine 22) interacts with phosphoenolpyruvate. Glycine 93 and arginine 122 together coordinate phosphoenolpyruvate. Serine 167, glutamine 169, aspartate 315, and lysine 342 together coordinate 3-phosphoshikimate. Position 169 (glutamine 169) interacts with phosphoenolpyruvate. Aspartate 315 acts as the Proton acceptor in catalysis. Residues arginine 346 and arginine 387 each coordinate phosphoenolpyruvate.

This sequence belongs to the EPSP synthase family. In terms of assembly, monomer.

It is found in the cytoplasm. It catalyses the reaction 3-phosphoshikimate + phosphoenolpyruvate = 5-O-(1-carboxyvinyl)-3-phosphoshikimate + phosphate. It participates in metabolic intermediate biosynthesis; chorismate biosynthesis; chorismate from D-erythrose 4-phosphate and phosphoenolpyruvate: step 6/7. Functionally, catalyzes the transfer of the enolpyruvyl moiety of phosphoenolpyruvate (PEP) to the 5-hydroxyl of shikimate-3-phosphate (S3P) to produce enolpyruvyl shikimate-3-phosphate and inorganic phosphate. In Thermus thermophilus (strain ATCC 27634 / DSM 579 / HB8), this protein is 3-phosphoshikimate 1-carboxyvinyltransferase.